The sequence spans 307 residues: UPF0276 protein Bphyt_5128 (307 aa).

It belongs to the UPF0276 family.

This chain is UPF0276 protein Bphyt_5128, found in Paraburkholderia phytofirmans (strain DSM 17436 / LMG 22146 / PsJN) (Burkholderia phytofirmans).